The following is a 146-amino-acid chain: UPF0178 protein Helmi_09130 (146 aa).

Belongs to the UPF0178 family.

The sequence is that of UPF0178 protein Helmi_09130 from Heliobacterium modesticaldum (strain ATCC 51547 / Ice1).